Consider the following 280-residue polypeptide: Small ribosomal subunit protein uS3 (280 aa).

The KH type-2 domain occupies 38-106 (IRRLLSTGLE…QVQLNILEVR (69 aa)). A disordered region spans residues 215 to 280 (AAAAPAGAER…PAAEPQSTES (66 aa)). Residues 238 to 280 (SGASGTTATGTEAGRAAASADESTAAGQPAEAAPAAEPQSTES) are compositionally biased toward low complexity.

Belongs to the universal ribosomal protein uS3 family. Part of the 30S ribosomal subunit. Forms a tight complex with proteins S10 and S14.

Functionally, binds the lower part of the 30S subunit head. Binds mRNA in the 70S ribosome, positioning it for translation. The protein is Small ribosomal subunit protein uS3 of Mycobacterium avium (strain 104).